We begin with the raw amino-acid sequence, 270 residues long: Fibroblast growth factor 5 (270 aa).

The N-terminal stretch at 1–20 (MSLSFLLLLFLSHLILSAWA) is a signal peptide. Positions 25–86 (RLAPKGQPGP…EQSSFQWSPS (62 aa)) are disordered. A compositionally biased stretch (low complexity) spans 41–69 (PGGASSRRSSSSTATSSSSPASSSSAASR). Polar residues predominate over residues 76–86 (LEQSSFQWSPS). N-linked (GlcNAc...) asparagine glycosylation occurs at N112. A disordered region spans residues 237–257 (EKKKPPNPVKPKVPLSAPRRS).

This sequence belongs to the heparin-binding growth factors family. In terms of assembly, interacts with FGFR1 and FGFR2. Affinity between fibroblast growth factors (FGFs) and their receptors is increased by heparan sulfate glycosaminoglycans that function as coreceptors.

The protein localises to the secreted. Its function is as follows. Plays an important role in the regulation of cell proliferation and cell differentiation. Required for normal regulation of the hair growth cycle. Functions as an inhibitor of hair elongation by promoting progression from anagen, the growth phase of the hair follicle, into catagen the apoptosis-induced regression phase. The polypeptide is Fibroblast growth factor 5 (FGF5) (Bos taurus (Bovine)).